The sequence spans 119 residues: Immunoglobulin heavy variable 2-70 (119 aa).

Positions 1-19 are cleaved as a signal peptide; it reads MDILCSTLLLLTVPSWVLS. Gln20 bears the Pyrrolidone carboxylic acid mark. The segment at 20-44 is framework-1; that stretch reads QVTLRESGPALVKPTQTLTLTCTFS. Residues 20–119 enclose the Ig-like domain; that stretch reads QVTLRESGPA…DTATYYCARI (100 aa). A disulfide bridge links Cys41 with Cys116. The interval 45–54 is complementarity-determining-1; it reads GFSLSTSGMC. A framework-2 region spans residues 55-71; the sequence is VSWIRQPPGKALEWLAL. The interval 72–78 is complementarity-determining-2; sequence IDWDDDK. The tract at residues 79-116 is framework-3; it reads YYSTSLKTRLTISKDTSKNQVVLTMTNMDPVDTATYYC. The complementarity-determining-3 stretch occupies residues 117–119; the sequence is ARI.

In terms of assembly, immunoglobulins are composed of two identical heavy chains and two identical light chains; disulfide-linked.

Its subcellular location is the secreted. The protein localises to the cell membrane. V region of the variable domain of immunoglobulin heavy chains that participates in the antigen recognition. Immunoglobulins, also known as antibodies, are membrane-bound or secreted glycoproteins produced by B lymphocytes. In the recognition phase of humoral immunity, the membrane-bound immunoglobulins serve as receptors which, upon binding of a specific antigen, trigger the clonal expansion and differentiation of B lymphocytes into immunoglobulins-secreting plasma cells. Secreted immunoglobulins mediate the effector phase of humoral immunity, which results in the elimination of bound antigens. The antigen binding site is formed by the variable domain of one heavy chain, together with that of its associated light chain. Thus, each immunoglobulin has two antigen binding sites with remarkable affinity for a particular antigen. The variable domains are assembled by a process called V-(D)-J rearrangement and can then be subjected to somatic hypermutations which, after exposure to antigen and selection, allow affinity maturation for a particular antigen. This is Immunoglobulin heavy variable 2-70 from Homo sapiens (Human).